A 147-amino-acid chain; its full sequence is 3-dehydroquinate dehydratase (147 aa).

Tyrosine 22 serves as the catalytic Proton acceptor. Substrate-binding residues include asparagine 73, histidine 79, and aspartate 86. Catalysis depends on histidine 99, which acts as the Proton donor. Residues 100-101 (LS) and arginine 110 contribute to the substrate site.

This sequence belongs to the type-II 3-dehydroquinase family. Homododecamer.

It carries out the reaction 3-dehydroquinate = 3-dehydroshikimate + H2O. The protein operates within metabolic intermediate biosynthesis; chorismate biosynthesis; chorismate from D-erythrose 4-phosphate and phosphoenolpyruvate: step 3/7. Its function is as follows. Catalyzes a trans-dehydration via an enolate intermediate. The polypeptide is 3-dehydroquinate dehydratase (Synechococcus sp. (strain WH7803)).